Here is a 45-residue protein sequence, read N- to C-terminus: Large ribosomal subunit protein bL34 (45 aa).

Residues 1–45 (MTKRTLGGTSRKRKRVSGFRVRMRSHTGRRVIRTRRKRGRSRLAV) form a disordered region. Positions 10–45 (SRKRKRVSGFRVRMRSHTGRRVIRTRRKRGRSRLAV) are enriched in basic residues.

The protein belongs to the bacterial ribosomal protein bL34 family.

This is Large ribosomal subunit protein bL34 from Parasynechococcus marenigrum (strain WH8102).